The chain runs to 245 residues: MPYRKYREKKYETKYREAFKVFQEKIGITFTDEKLLIQAFTHSSYVNEHRKKPHEDNERLEFLGDAVLELTVSQYLFQKYPTMSEGELTKLRAAIVCEPSLVRFANELSFGGLVLLGKGEEMTGGRERPALLADVFEAFIGALYLDQGLETVWGFLKEIVYPKINEGAFSHVMDYKSQLQELIQRDGSGNIEYQILQEKGPAHNREFVSRVTLNNVALGLGSGKSKKEAEQQAAAEALKKLKEQL.

An RNase III domain is found at 19–148 (FKVFQEKIGI…FIGALYLDQG (130 aa)). E61 contacts Mg(2+). D65 is an active-site residue. Mg(2+)-binding residues include D134 and E137. E137 is an active-site residue. The 70-residue stretch at 174 to 243 (DYKSQLQELI…AAEALKKLKE (70 aa)) folds into the DRBM domain.

It belongs to the ribonuclease III family. As to quaternary structure, homodimer. The cofactor is Mg(2+).

It localises to the cytoplasm. The enzyme catalyses Endonucleolytic cleavage to 5'-phosphomonoester.. Digests double-stranded RNA. Involved in the processing of primary rRNA transcript to yield the immediate precursors to the large and small rRNAs (23S and 16S). Processes some mRNAs, and tRNAs when they are encoded in the rRNA operon. Processes pre-crRNA and tracrRNA of type II CRISPR loci if present in the organism. This is Ribonuclease 3 from Bacillus cereus (strain ZK / E33L).